Consider the following 334-residue polypeptide: D-fructose 1,6-bisphosphatase class 2/sedoheptulose 1,7-bisphosphatase (334 aa).

Residues D33, E57, D85, and E88 each coordinate Mn(2+). Substrate is bound by residues 88–90 (EGT), Y119, 164–166 (RAR), and 186–188 (DGD). Residue E213 participates in Mn(2+) binding.

It belongs to the FBPase class 2 family. In terms of assembly, homotetramer. It depends on Mn(2+) as a cofactor.

It carries out the reaction beta-D-fructose 1,6-bisphosphate + H2O = beta-D-fructose 6-phosphate + phosphate. The enzyme catalyses D-sedoheptulose 1,7-bisphosphate + H2O = D-sedoheptulose 7-phosphate + phosphate. It functions in the pathway carbohydrate biosynthesis; Calvin cycle. In terms of biological role, catalyzes the hydrolysis of fructose 1,6-bisphosphate (Fru 1,6-P2) and sedoheptulose 1,7-bisphosphate (Sed 1,7-P2) to fructose 6-phosphate and sedoheptulose 7-phosphate, respectively. The protein is D-fructose 1,6-bisphosphatase class 2/sedoheptulose 1,7-bisphosphatase of Prochlorococcus marinus (strain MIT 9303).